Here is a 346-residue protein sequence, read N- to C-terminus: UPF0065 protein in the TAR-I ttuE-ttuC' intergenic region (346 aa).

A signal peptide spans 1 to 46 (MQASMLDSQWRLTIFSPRRKVKVSQMNSRFIAVLLTATILPWVAQA).

It belongs to the UPF0065 (bug) family.

The protein localises to the periplasm. The sequence is that of UPF0065 protein in the TAR-I ttuE-ttuC' intergenic region from Agrobacterium vitis (Rhizobium vitis).